Reading from the N-terminus, the 373-residue chain is MSEKKINLLDLDRKALRALFTEMGEKPFRADQLMKWIYHFGVSDFEEMTNINKVLRAKLAAKCEIVAPEISSYQKSVDGTIKFAINVGDGQEVETVYIPEDDRATLCVSSQVGCALECTFCSTAQQGFNRNLTVAEIVGQIWRVADFIGFVKDTGERPITNVVMMGMGEPLLNLKNVIPAMDIMLDDFGFSLSKRRVTLSTSGVVPALDKLGDVLDVALAVSIHAPNDELRDVLVPVNKKYPLEEFLGGIRRYIAKSNANRGRVTVEYVMLDHINDSTDQAHELAKLMKDTPCKVNLIPFNPYPGSPYGRSSNSRIDRFSKVLMEYGLTVIVRKTRGDDIDAACGQLAGDIRDRTKRLAKKQMQQNQISVTIN.

The active-site Proton acceptor is the glutamate 94. The Radical SAM core domain maps to 100 to 339 (EDDRATLCVS…VIVRKTRGDD (240 aa)). A disulfide bridge links cysteine 107 with cysteine 344. [4Fe-4S] cluster is bound by residues cysteine 114, cysteine 118, and cysteine 121. S-adenosyl-L-methionine is bound by residues 168 to 169 (GE), serine 200, 222 to 224 (SIH), and asparagine 301. The active-site S-methylcysteine intermediate is cysteine 344.

It belongs to the radical SAM superfamily. RlmN family. Requires [4Fe-4S] cluster as cofactor.

The protein resides in the cytoplasm. It catalyses the reaction adenosine(2503) in 23S rRNA + 2 reduced [2Fe-2S]-[ferredoxin] + 2 S-adenosyl-L-methionine = 2-methyladenosine(2503) in 23S rRNA + 5'-deoxyadenosine + L-methionine + 2 oxidized [2Fe-2S]-[ferredoxin] + S-adenosyl-L-homocysteine. The enzyme catalyses adenosine(37) in tRNA + 2 reduced [2Fe-2S]-[ferredoxin] + 2 S-adenosyl-L-methionine = 2-methyladenosine(37) in tRNA + 5'-deoxyadenosine + L-methionine + 2 oxidized [2Fe-2S]-[ferredoxin] + S-adenosyl-L-homocysteine. Its function is as follows. Specifically methylates position 2 of adenine 2503 in 23S rRNA and position 2 of adenine 37 in tRNAs. m2A2503 modification seems to play a crucial role in the proofreading step occurring at the peptidyl transferase center and thus would serve to optimize ribosomal fidelity. In Shewanella pealeana (strain ATCC 700345 / ANG-SQ1), this protein is Dual-specificity RNA methyltransferase RlmN.